A 333-amino-acid chain; its full sequence is Eukaryotic translation initiation factor 2 subunit 2 (333 aa).

Disordered regions lie at residues 1-87, 98-117, and 141-165; these read MSGD…KSKK, IKDL…EEDL, and EKDE…QTGP. Position 2 is an N-acetylserine (Ser-2). Ser-2 and Ser-13 each carry phosphoserine. Over residues 13-22 the composition is skewed to basic residues; the sequence is SKKKKKKKKP. Thr-36 is subject to Phosphothreonine. Positions 40–51 are enriched in basic and acidic residues; that stretch reads ETKEVEPEPTED. Ser-67 carries the phosphoserine modification. A Glycyl lysine isopeptide (Lys-Gly) (interchain with G-Cter in SUMO2) cross-link involves residue Lys-102. Ser-105 is subject to Phosphoserine. The span at 106–117 shows a compositional bias: acidic residues; that stretch reads DVQEPAEPEEDL. Ser-158 and Ser-218 each carry phosphoserine. An N6-acetyllysine mark is found at Lys-265 and Lys-293. The segment at 281-305 adopts a C4-type zinc-finger fold; the sequence is CHTCRSPDTILQKDTRLYFLQCETC.

Belongs to the eIF-2-beta/eIF-5 family. Eukaryotic translation initiation factor 2 eIF2 is a heterotrimeric complex composed of an alpha (EIF2S1), a beta (EIF2S2) and a gamma (EIF2S3) chain. eIF2 is member of the 43S pre-initiation complex (43S PIC). eIF2 forms a complex with at least CELF1/CUGBP1, CALR, CALR3, EIF2S1, EIF2S2, HSP90B1 and HSPA5. Interacts with BZW2/5MP1. Interacts with EIF5.

It localises to the cytoplasm. It is found in the cytosol. In terms of biological role, component of the eIF2 complex that functions in the early steps of protein synthesis by forming a ternary complex with GTP and initiator tRNA. This complex binds to a 40S ribosomal subunit, followed by mRNA binding to form a 43S pre-initiation complex (43S PIC). Junction of the 60S ribosomal subunit to form the 80S initiation complex is preceded by hydrolysis of the GTP bound to eIF2 and release of an eIF2-GDP binary complex. In order for eIF2 to recycle and catalyze another round of initiation, the GDP bound to eIF2 must exchange with GTP by way of a reaction catalyzed by eIF2B. In Bos taurus (Bovine), this protein is Eukaryotic translation initiation factor 2 subunit 2 (EIF2S2).